Consider the following 80-residue polypeptide: Exodeoxyribonuclease 7 small subunit (80 aa).

The tract at residues 60 to 80 (LIDSDGTEHNLDPNNASAPEE) is disordered. The span at 61-70 (IDSDGTEHNL) shows a compositional bias: basic and acidic residues. The span at 71 to 80 (DPNNASAPEE) shows a compositional bias: polar residues.

The protein belongs to the XseB family. In terms of assembly, heterooligomer composed of large and small subunits.

Its subcellular location is the cytoplasm. It catalyses the reaction Exonucleolytic cleavage in either 5'- to 3'- or 3'- to 5'-direction to yield nucleoside 5'-phosphates.. In terms of biological role, bidirectionally degrades single-stranded DNA into large acid-insoluble oligonucleotides, which are then degraded further into small acid-soluble oligonucleotides. The protein is Exodeoxyribonuclease 7 small subunit of Lactobacillus acidophilus (strain ATCC 700396 / NCK56 / N2 / NCFM).